Consider the following 177-residue polypeptide: MKAETTTGVEELLNELVGRAAGEVGLILFSLGIEGEFTDDQLSLELGIEINEIRKALFALYEIGLADYVRRRDDETGWMEYYWRINYDKALDVLKRELEKTAKKLREKIEAETSTIYYICPNMCVKVSYNDAMELNFTCPRCGAMLDYLDCSKAIEKIEEEVRRIEEILESLDKNSG.

Residues 9 to 91 enclose the HTH TFE/IIEalpha-type domain; that stretch reads VEELLNELVG…YWRINYDKAL (83 aa).

The protein belongs to the TFE family. As to quaternary structure, monomer. Interaction with RNA polymerase subunits RpoF and RpoE is necessary for Tfe stimulatory transcription activity. Able to interact with Tbp and RNA polymerase in the absence of DNA promoter. Interacts both with the preinitiation and elongation complexes.

Its function is as follows. Transcription factor that plays a role in the activation of archaeal genes transcribed by RNA polymerase. Facilitates transcription initiation by enhancing TATA-box recognition by TATA-box-binding protein (Tbp), and transcription factor B (Tfb) and RNA polymerase recruitment. Not absolutely required for transcription in vitro, but particularly important in cases where Tbp or Tfb function is not optimal. It dynamically alters the nucleic acid-binding properties of RNA polymerases by stabilizing the initiation complex and destabilizing elongation complexes. Seems to translocate with the RNA polymerase following initiation and acts by binding to the non template strand of the transcription bubble in elongation complexes. The protein is Transcription factor E of Archaeoglobus fulgidus (strain ATCC 49558 / DSM 4304 / JCM 9628 / NBRC 100126 / VC-16).